Consider the following 410-residue polypeptide: Multifunctional CCA protein (410 aa).

ATP contacts are provided by Gly-8 and Arg-11. Residues Gly-8 and Arg-11 each contribute to the CTP site. Residues Asp-21 and Asp-23 each contribute to the Mg(2+) site. The ATP site is built by Arg-91, Arg-138, and Arg-141. CTP-binding residues include Arg-91, Arg-138, and Arg-141. The 119-residue stretch at 229–347 (TGVHQEMVSD…AQLALVCEAD (119 aa)) folds into the HD domain.

Belongs to the tRNA nucleotidyltransferase/poly(A) polymerase family. Bacterial CCA-adding enzyme type 1 subfamily. In terms of assembly, monomer. Can also form homodimers and oligomers. Requires Mg(2+) as cofactor. It depends on Ni(2+) as a cofactor.

The catalysed reaction is a tRNA precursor + 2 CTP + ATP = a tRNA with a 3' CCA end + 3 diphosphate. It catalyses the reaction a tRNA with a 3' CCA end + 2 CTP + ATP = a tRNA with a 3' CCACCA end + 3 diphosphate. Its function is as follows. Catalyzes the addition and repair of the essential 3'-terminal CCA sequence in tRNAs without using a nucleic acid template. Adds these three nucleotides in the order of C, C, and A to the tRNA nucleotide-73, using CTP and ATP as substrates and producing inorganic pyrophosphate. tRNA 3'-terminal CCA addition is required both for tRNA processing and repair. Also involved in tRNA surveillance by mediating tandem CCA addition to generate a CCACCA at the 3' terminus of unstable tRNAs. While stable tRNAs receive only 3'-terminal CCA, unstable tRNAs are marked with CCACCA and rapidly degraded. This Xanthomonas campestris pv. campestris (strain B100) protein is Multifunctional CCA protein.